Here is a 272-residue protein sequence, read N- to C-terminus: Alcohol dehydrogenase-related 31 kDa protein (272 aa).

11–34 (YVADCGGIALETSKVLMTKNIAKL) provides a ligand contact to NAD(+). Ser139 contacts substrate. The active-site Proton acceptor is the Tyr152.

This sequence belongs to the short-chain dehydrogenases/reductases (SDR) family.

The chain is Alcohol dehydrogenase-related 31 kDa protein (Adhr) from Drosophila mauritiana (Fruit fly).